Here is a 350-residue protein sequence, read N- to C-terminus: Holliday junction branch migration complex subunit RuvB (350 aa).

The tract at residues 1–184 (MSKTPERLVT…FGIPIRLEFY (184 aa)) is large ATPase domain (RuvB-L). Residues leucine 23, arginine 24, glycine 65, lysine 68, threonine 69, threonine 70, 131–133 (EDF), arginine 174, tyrosine 184, and arginine 221 contribute to the ATP site. Threonine 69 contributes to the Mg(2+) binding site. Residues 185–255 (TIEELERIVL…LADKALSLLD (71 aa)) form a small ATPAse domain (RuvB-S) region. The head domain (RuvB-H) stretch occupies residues 258-350 (PIGLDQMDRR…GLFPDQSEED (93 aa)). Arginine 294, arginine 313, and arginine 318 together coordinate DNA.

The protein belongs to the RuvB family. In terms of assembly, homohexamer. Forms an RuvA(8)-RuvB(12)-Holliday junction (HJ) complex. HJ DNA is sandwiched between 2 RuvA tetramers; dsDNA enters through RuvA and exits via RuvB. An RuvB hexamer assembles on each DNA strand where it exits the tetramer. Each RuvB hexamer is contacted by two RuvA subunits (via domain III) on 2 adjacent RuvB subunits; this complex drives branch migration. In the full resolvosome a probable DNA-RuvA(4)-RuvB(12)-RuvC(2) complex forms which resolves the HJ.

Its subcellular location is the cytoplasm. It carries out the reaction ATP + H2O = ADP + phosphate + H(+). Functionally, the RuvA-RuvB-RuvC complex processes Holliday junction (HJ) DNA during genetic recombination and DNA repair, while the RuvA-RuvB complex plays an important role in the rescue of blocked DNA replication forks via replication fork reversal (RFR). RuvA specifically binds to HJ cruciform DNA, conferring on it an open structure. The RuvB hexamer acts as an ATP-dependent pump, pulling dsDNA into and through the RuvAB complex. RuvB forms 2 homohexamers on either side of HJ DNA bound by 1 or 2 RuvA tetramers; 4 subunits per hexamer contact DNA at a time. Coordinated motions by a converter formed by DNA-disengaged RuvB subunits stimulates ATP hydrolysis and nucleotide exchange. Immobilization of the converter enables RuvB to convert the ATP-contained energy into a lever motion, pulling 2 nucleotides of DNA out of the RuvA tetramer per ATP hydrolyzed, thus driving DNA branch migration. The RuvB motors rotate together with the DNA substrate, which together with the progressing nucleotide cycle form the mechanistic basis for DNA recombination by continuous HJ branch migration. Branch migration allows RuvC to scan DNA until it finds its consensus sequence, where it cleaves and resolves cruciform DNA. The protein is Holliday junction branch migration complex subunit RuvB of Beijerinckia indica subsp. indica (strain ATCC 9039 / DSM 1715 / NCIMB 8712).